The sequence spans 283 residues: Daunorubicin resistance ABC transporter permease protein DrrB1 (283 aa).

The region spanning 53 to 280 is the ABC transmembrane type-2 domain; sequence VQLIDIVLMP…PLTMRLYRNK (228 aa). Helical transmembrane passes span 58–78, 85–105, 150–170, 171–191, 198–218, and 252–272; these read IVLM…GAFA, LQFY…VYTG, VFLG…VVGA, MLVL…LGVV, VSGT…IFVM, and FWDV…FAPL.

This sequence belongs to the ABC-2 integral membrane protein family. In terms of assembly, the complex is probably composed of two ATP-binding proteins (DrrA1) and two transmembrane proteins (DrrB1).

It localises to the cell membrane. Part of the ABC transporter complex DrrA1B1 involved in daunorubicin efflux. Responsible for the translocation of the substrate across the membrane. Confers self-resistance to daunorubicin, an antibiotic produced by S.coeruleorubidus. The sequence is that of Daunorubicin resistance ABC transporter permease protein DrrB1 from Streptomyces coeruleorubidus.